Here is a 907-residue protein sequence, read N- to C-terminus: DNA ligase 4 (907 aa).

ATP is bound by residues E273, K275, R280, E333, F378, E438, K443, K460, and K462. K275 functions as the N6-AMP-lysine intermediate in the catalytic mechanism. E333 is a Mg(2+) binding site. Residue E438 participates in Mg(2+) binding. 2 BRCT domains span residues 655-754 and 800-906; these read PVSN…ESDI and VPLF…HYQC.

This sequence belongs to the ATP-dependent DNA ligase family. The cofactor is Mg(2+).

It localises to the nucleus. It catalyses the reaction ATP + (deoxyribonucleotide)n-3'-hydroxyl + 5'-phospho-(deoxyribonucleotide)m = (deoxyribonucleotide)n+m + AMP + diphosphate.. DNA ligase involved in DNA non-homologous end joining (NHEJ); required for double-strand break (DSB) repair. This is DNA ligase 4 (LIG4) from Kluyveromyces lactis (strain ATCC 8585 / CBS 2359 / DSM 70799 / NBRC 1267 / NRRL Y-1140 / WM37) (Yeast).